Here is a 123-residue protein sequence, read N- to C-terminus: Methicillin resistance regulatory protein MecI (123 aa).

The H-T-H motif DNA-binding region spans 7-71 (EISSAEWEVM…KDNKIFQYYS (65 aa)). Positions 74 to 123 (EESDIKYKTSKNFINKVYKGGFNSLVLNFVEKEDLSQDEIEELRNILNKK) are important for dimerization.

The protein belongs to the BlaI transcriptional regulatory family. In terms of assembly, monomer and homodimer. Upon exposure to beta-lactams, proteolytic cleavage at a single site impairs dimerization and abolishes repressor activity.

The protein resides in the cytoplasm. Functionally, transcriptional repressor that constitutively blocks the transcription of the gene for the penicillin-binding protein MecA. Binds palindromic DNA with the sequence 5'-TACA-[AT]-N-TGTA-3'. Regulates genes involved in antibiotic resistance. Binds DNA as a dimer. In Staphylococcus aureus (strain N315), this protein is Methicillin resistance regulatory protein MecI (mecI).